The sequence spans 414 residues: Phthiocerol/phthiodiolone dimycocerosyl transferase (414 aa).

Histidine 118 functions as the Proton acceptor in the catalytic mechanism.

The protein belongs to the acyltransferase PapA5 family. In terms of assembly, monomer. Interacts directly with the acyl carrier protein (ACP) domain of the mycocerosic acid synthase (mas) protein.

It carries out the reaction 2 a mycocerosyl-[mycocerosic acid synthase] + a phthiocerol = a dimycocerosyl phthiocerol + 2 holo-[mycocerosic acid synthase].. The catalysed reaction is 2 a mycocerosyl-[mycocerosic acid synthase] + a phthiodiolone = a dimycocerosyl phthiodiolone + 2 holo-[mycocerosic acid synthase].. The enzyme catalyses 2 a mycocerosyl-[mycocerosic acid synthase] + a phenolphthiocerol = a dimycocerosyl phenolphthiocerol + 2 holo-[mycocerosic acid synthase].. Functionally, catalyzes diesterification of phthiocerol, phthiodiolone, and phenolphthiocerol with mycocerosic acids, the final step in the phthiocerol, phthiodiolone and phenolphthiocerol dimycocerosate esters (PDIM) synthesis. Can directly transfer the mycocerosate bound to the mycocerosic acid synthase (mas) onto the substrate alcohols. In Mycobacterium ulcerans (strain Agy99), this protein is Phthiocerol/phthiodiolone dimycocerosyl transferase (papA5).